The following is a 363-amino-acid chain: 5-formaminoimidazole-4-carboxamide-1-(beta)-D-ribofuranosyl 5'-monophosphate synthetase (363 aa).

5-amino-1-(5-phospho-beta-D-ribosyl)imidazole-4-carboxamide-binding residues include histidine 29 and serine 96. An ATP-grasp domain is found at 118 to 354 (RDILRWEAER…ISREIKNAIE (237 aa)). ATP is bound by residues 148–210 (PEDI…TNFC) and glutamate 232. Asparagine 260 contributes to the 5-amino-1-(5-phospho-beta-D-ribosyl)imidazole-4-carboxamide binding site. Residues glutamine 299 and glutamate 312 each contribute to the Mg(2+) site.

This sequence belongs to the phosphohexose mutase family. Mg(2+) serves as cofactor. The cofactor is Mn(2+).

The catalysed reaction is 5-amino-1-(5-phospho-beta-D-ribosyl)imidazole-4-carboxamide + formate + ATP = 5-formamido-1-(5-phospho-D-ribosyl)imidazole-4-carboxamide + ADP + phosphate. It participates in purine metabolism; IMP biosynthesis via de novo pathway; 5-formamido-1-(5-phospho-D-ribosyl)imidazole-4-carboxamide from 5-amino-1-(5-phospho-D-ribosyl)imidazole-4-carboxamide (formate route): step 1/1. Functionally, catalyzes the ATP- and formate-dependent formylation of 5-aminoimidazole-4-carboxamide-1-beta-d-ribofuranosyl 5'-monophosphate (AICAR) to 5-formaminoimidazole-4-carboxamide-1-beta-d-ribofuranosyl 5'-monophosphate (FAICAR) in the absence of folates. In Methanosphaera stadtmanae (strain ATCC 43021 / DSM 3091 / JCM 11832 / MCB-3), this protein is 5-formaminoimidazole-4-carboxamide-1-(beta)-D-ribofuranosyl 5'-monophosphate synthetase.